Here is a 405-residue protein sequence, read N- to C-terminus: Bifunctional enzyme IspD/IspF (405 aa).

The 2-C-methyl-D-erythritol 4-phosphate cytidylyltransferase stretch occupies residues 1–240 (MTLADKPVLS…KLLLDEPKYR (240 aa)). Residues 240-405 (RVGTGYDIHR…LLYKIAPLHN (166 aa)) are 2-C-methyl-D-erythritol 2,4-cyclodiphosphate synthase. Residues Asp246 and His248 each contribute to the a divalent metal cation site. 4-CDP-2-C-methyl-D-erythritol 2-phosphate contacts are provided by residues 246 to 248 (DIH) and 277 to 278 (HS). His285 serves as a coordination point for a divalent metal cation. 4-CDP-2-C-methyl-D-erythritol 2-phosphate contacts are provided by residues 299-301 (DIG), 375-378 (TTTE), and Arg385.

In the N-terminal section; belongs to the IspD/TarI cytidylyltransferase family. IspD subfamily. It in the C-terminal section; belongs to the IspF family. Requires a divalent metal cation as cofactor.

The catalysed reaction is 2-C-methyl-D-erythritol 4-phosphate + CTP + H(+) = 4-CDP-2-C-methyl-D-erythritol + diphosphate. It catalyses the reaction 4-CDP-2-C-methyl-D-erythritol 2-phosphate = 2-C-methyl-D-erythritol 2,4-cyclic diphosphate + CMP. The protein operates within isoprenoid biosynthesis; isopentenyl diphosphate biosynthesis via DXP pathway; isopentenyl diphosphate from 1-deoxy-D-xylulose 5-phosphate: step 2/6. It functions in the pathway isoprenoid biosynthesis; isopentenyl diphosphate biosynthesis via DXP pathway; isopentenyl diphosphate from 1-deoxy-D-xylulose 5-phosphate: step 4/6. Bifunctional enzyme that catalyzes the formation of 4-diphosphocytidyl-2-C-methyl-D-erythritol from CTP and 2-C-methyl-D-erythritol 4-phosphate (MEP) (IspD), and catalyzes the conversion of 4-diphosphocytidyl-2-C-methyl-D-erythritol 2-phosphate (CDP-ME2P) to 2-C-methyl-D-erythritol 2,4-cyclodiphosphate (ME-CPP) with a corresponding release of cytidine 5-monophosphate (CMP) (IspF). This Wolbachia sp. subsp. Brugia malayi (strain TRS) protein is Bifunctional enzyme IspD/IspF.